The sequence spans 582 residues: Zinc finger protein 319 (582 aa).

Positions 1–14 (MSESWQQPPQTQPQ) are enriched in low complexity. The interval 1–39 (MSESWQQPPQTQPQQPQPPQPQHHAEPPPALAEHTLPPG) is disordered. The C2H2-type 1 zinc-finger motif lies at 76–100 (PKCGVCGHDLAHLSSPHEHQCLAGH). The segment at 104–126 (FQCTQCLKIFHQATDLLEHQCVQ) adopts a C2H2-type 2; degenerate zinc-finger fold. K130 is covalently cross-linked (Glycyl lysine isopeptide (Lys-Gly) (interchain with G-Cter in SUMO2)). The C2H2-type 3 zinc-finger motif lies at 132–154 (FVCGVCKMGFSLLTSLAQHHSSH). Over residues 174–196 (EPATTAAPSLPAAPAPSTVTPAE) the composition is skewed to low complexity. The disordered stretch occupies residues 174–198 (EPATTAAPSLPAAPAPSTVTPAEQA). 3 consecutive C2H2-type zinc fingers follow at residues 202–224 (YSCP…ERIH), 230–252 (YKCT…KRTH), and 258–280 (YKCA…MYAH). S281 bears the Phosphoserine mark. A C2H2-type 7; degenerate zinc finger spans residues 287-309 (FRCNVCELHFKESSELLQHPCTP). C2H2-type zinc fingers lie at residues 315 to 337 (FRCG…ERTH), 343 to 365 (FKCD…RRTH), and 371 to 393 (FKCG…QHVH). The C2H2-type 11; degenerate zinc-finger motif lies at 399–421 (FKCPVCQKGFDQSAELLRHKCLP). The segment at 428 to 450 (FKCPVCNKAYKRASALQKHQLAH) adopts a C2H2-type 12 zinc-finger fold. Residues 458–480 (LRCTLCERRFFSSSEFVQHRCDP) form a C2H2-type 13; degenerate zinc finger. 3 consecutive C2H2-type zinc fingers follow at residues 486–508 (LKCP…RRVH), 514–536 (YKCP…QGVH), and 542–564 (FKCV…SAQH).

This sequence belongs to the krueppel C2H2-type zinc-finger protein family.

It localises to the nucleus. In terms of biological role, may be involved in transcriptional regulation. The protein is Zinc finger protein 319 (ZNF319) of Homo sapiens (Human).